Reading from the N-terminus, the 97-residue chain is Large ribosomal subunit protein uL23 (97 aa).

The protein belongs to the universal ribosomal protein uL23 family. Part of the 50S ribosomal subunit. Contacts protein L29, and trigger factor when it is bound to the ribosome.

Its function is as follows. One of the early assembly proteins it binds 23S rRNA. One of the proteins that surrounds the polypeptide exit tunnel on the outside of the ribosome. Forms the main docking site for trigger factor binding to the ribosome. This chain is Large ribosomal subunit protein uL23, found in Rhizobium rhizogenes (strain K84 / ATCC BAA-868) (Agrobacterium radiobacter).